We begin with the raw amino-acid sequence, 412 residues long: Imidazolonepropionase (412 aa).

Fe(3+)-binding residues include His71 and His73. The Zn(2+) site is built by His71 and His73. Arg80, Tyr143, and His176 together coordinate 4-imidazolone-5-propanoate. Tyr143 provides a ligand contact to N-formimidoyl-L-glutamate. Residue His241 participates in Fe(3+) binding. Zn(2+) is bound at residue His241. 4-imidazolone-5-propanoate is bound at residue Gln244. Asp316 contacts Fe(3+). Asp316 lines the Zn(2+) pocket. N-formimidoyl-L-glutamate is bound by residues Asn318 and Gly320. Thr321 contacts 4-imidazolone-5-propanoate.

It belongs to the metallo-dependent hydrolases superfamily. HutI family. Zn(2+) serves as cofactor. The cofactor is Fe(3+).

Its subcellular location is the cytoplasm. The catalysed reaction is 4-imidazolone-5-propanoate + H2O = N-formimidoyl-L-glutamate. The protein operates within amino-acid degradation; L-histidine degradation into L-glutamate; N-formimidoyl-L-glutamate from L-histidine: step 3/3. Its function is as follows. Catalyzes the hydrolytic cleavage of the carbon-nitrogen bond in imidazolone-5-propanoate to yield N-formimidoyl-L-glutamate. It is the third step in the universal histidine degradation pathway. This is Imidazolonepropionase from Aromatoleum aromaticum (strain DSM 19018 / LMG 30748 / EbN1) (Azoarcus sp. (strain EbN1)).